The chain runs to 533 residues: MACTTILVGKDASYDGSTIIARNEDSANGEFNPKRFIVVKPEEQPREYKSVISHLTITLPDDPLQYTAVPNADLKEGIWGEAGVNEANVAMSATETLTTNERVLGADPFVEYTPAKGDEPEVPGGIGEEDFLTIVLPYVKTAREGVQRLGALLEEFGTYEMNGVAFSDSNEIWWLETVGGHHWIAKRVPDEAYVTMPNQLGIDEFDLEDALGDQEAHMCSEDLAEFIETNHLDLAVENTTPFNPRDAFGSHSDSDHVYNTPRAWYMQRFLNPYDEVWDGPDADHKPTSDDIPWARQPERKVTIEDIKYVLSSHYQGTPFDPYGQLGDERTRHMYRTIGINRQSQLAVMQIRPYRPQASRAIQWMAYGSNPFNTLVPFFPNVDTTPAYLEDTTTRVTSENFYWANRIIAALCDGAFRSTSNAVERYQEKTGAMGHRLVAATDEQIARLGLTAAEEAAQSAAEEEFEADNVDGDVQPMTPDETIAALRNPEVREILAAANQTMADQLKEETEKLLDSVLYTRSMEMKNGFHMSDF.

Cysteine 3 is an active-site residue.

Belongs to the peptidase C69 family.

The enzyme catalyses an L-aminoacyl-L-amino acid + H2O = 2 an L-alpha-amino acid. Hydrolyzes a wide range of dipeptides. Highest activity against Ala-Gln. The chain is Dipeptidase from Bifidobacterium longum (strain NCC 2705).